The primary structure comprises 1008 residues: SKI family transcriptional corepressor 2 (1008 aa).

2 disordered regions span residues 280–315 (HLLGAPPPPPPPPPLAELAGAPHAHHKRPRFDDDDD) and 514–927 (EPGG…KKDV). Pro residues-rich tracts occupy residues 284 to 294 (APPPPPPPPPL) and 525 to 534 (APPPGQPPPV). 2 stretches are compositionally biased toward low complexity: residues 535–544 (VANGPGSGPP) and 578–595 (GVTSGTGSASSGAGSVGT). The segment covering 626 to 635 (GGKDDAESLA) has biased composition (basic and acidic residues). Over residues 649-666 (PAHHHHHHHHPHHHHHHP) the composition is skewed to basic residues. Over residues 691-703 (APPPPPPPPPLAP) the composition is skewed to pro residues. Composition is skewed to acidic residues over residues 724–739 (DSSEDEEDEEEEQEVD) and 748–766 (GEEEEDGRDPEDEEEEDEE). Over residues 787–797 (LSEKGSGRDRT) the composition is skewed to basic and acidic residues. The segment covering 842 to 855 (SSSGGSRPGSPVHH) has biased composition (low complexity). Basic and acidic residues-rich tracts occupy residues 856 to 872 (PSLEEEPSYKDNQKPKE), 880 to 890 (TKDDNFSDKNK), and 905 to 915 (FWRERSGEHTQ).

The protein belongs to the SKI family. As to quaternary structure, interacts with SMAD2 and SMAD3. Expression is restricted to adult and embryonic central nervous system. Expressed at high levels in the developing cerebellum, ventral metencephalon and myelencephalon at 12.5 dpc (at protein level). In the adult cerebellum, expressed specifically in Purkinje cells.

The protein resides in the nucleus. It is found in the cytoplasm. Acts as a TGF-beta antagonist in the nervous system. Exhibits transcriptional repressor activity. The polypeptide is SKI family transcriptional corepressor 2 (Mus musculus (Mouse)).